The primary structure comprises 374 residues: Serine/threonine-protein kinase-transforming protein mos (374 aa).

A Protein kinase domain is found at 94–370; sequence VCLMHRLGSG…LLQRDLKAFR (277 aa). ATP-binding positions include 100–108 and Lys-121; that span reads LGSGGFGSV. Asp-229 (proton acceptor) is an active-site residue.

The protein belongs to the protein kinase superfamily. Ser/Thr protein kinase family.

The enzyme catalyses L-seryl-[protein] + ATP = O-phospho-L-seryl-[protein] + ADP + H(+). It catalyses the reaction L-threonyl-[protein] + ATP = O-phospho-L-threonyl-[protein] + ADP + H(+). The sequence is that of Serine/threonine-protein kinase-transforming protein mos (V-MOS) from Mus musculus (Mouse).